The sequence spans 513 residues: MKVYKKVAFVMAFIMFFSVLPTISMSSEANGAALSNPNANQTTKNVYSWLANLPNKSNKRVVSGHFGGYSDSTLAWIKQCARELTGKMPGILSCDYKNWQTRLYVADQISYGCNQELINFWNQGGLVTISVHMPNPGFHSGENYKTILPTSQFQNLTNHRTTEGRRWKDMLDKMADGLDELQNNGVTVLFRPLHEMNGEWFWWGAEGYNQFDQTRANAYISAWRDMYQYFTHERKLNNLIWVYSPDVYRDHVTSYYPGANYVDIVALDSYHPDPHSLTDQYNRMIALDKPFAFAEIGPPESMAGSFDYSNYIQAIKQKYPRTVYFLAWNDKWSPHNNRGAWDLFNDSWVVNRGEIDYGQSNPATVLYDFENNTLSWSGCEFTDGGPWTSNEWSANGTQSLKADVVLGNNSYHLQKTVNRNLSSFKNLEIKVSHSSWGNVGSGMTARVFVKTGSAWRWNAGEFCQFAGKRTTALSIDLTKVSNLHDVREIGVEYKAPANSNGKTAIYLDHVTVR.

A signal peptide spans 1–26; that stretch reads MKVYKKVAFVMAFIMFFSVLPTISMS. Residues 41–353 enclose the GH26 domain; sequence QTTKNVYSWL…FNDSWVVNRG (313 aa). Residue H132 coordinates substrate. E195 acts as the Proton donor in catalysis. W200 and Y270 together coordinate substrate. E295 functions as the Nucleophile in the catalytic mechanism. 429–430 contacts substrate; the sequence is IK.

This sequence belongs to the glycosyl hydrolase 26 family.

It localises to the secreted. The catalysed reaction is Random hydrolysis of (1-&gt;4)-beta-D-mannosidic linkages in mannans, galactomannans and glucomannans.. Its function is as follows. Could be involved in the degradation of glucomannan and catalyzes the endo hydrolysis of beta-1,4-linked mannan, galactomannan and glucomannan. This is Mannan endo-1,4-beta-mannosidase A and B from Caldalkalibacillus mannanilyticus (strain DSM 16130 / CIP 109019 / JCM 10596 / AM-001) (Bacillus mannanilyticus).